A 65-amino-acid chain; its full sequence is Hirudin-3B (65 aa).

The interaction with thrombin active site stretch occupies residues 1-3; the sequence is VVY. Cystine bridges form between C6-C14, C16-C28, and C22-C39. The tract at residues 40 to 65 is disordered; that stretch reads VTGEGTPKPQSHNDGDFEEIPEEYLQ. T45 is a glycosylation site (O-linked (GalNAc...) threonine). The tract at residues 55-65 is interaction with fibrinogen-binding exosite of thrombin; the sequence is DFEEIPEEYLQ. Over residues 55-65 the composition is skewed to acidic residues; the sequence is DFEEIPEEYLQ. A Sulfotyrosine modification is found at Y63.

The protein belongs to the protease inhibitor I14 (hirudin) family.

Its subcellular location is the secreted. Functionally, hirudin is a potent thrombin-specific protease inhibitor. It forms a stable non-covalent complex with alpha-thrombin, thereby abolishing its ability to cleave fibrinogen. This chain is Hirudin-3B, found in Hirudo medicinalis (Medicinal leech).